A 393-amino-acid polypeptide reads, in one-letter code: Acetate kinase (393 aa).

Asn7 contacts Mg(2+). Lys14 serves as a coordination point for ATP. Arg89 is a substrate binding site. Residue Asp146 is the Proton donor/acceptor of the active site. ATP-binding positions include 204–208 (HIGNG), 279–281 (DSR), and 327–331 (GIGEN). Glu379 serves as a coordination point for Mg(2+).

The protein belongs to the acetokinase family. Homodimer. Mg(2+) serves as cofactor. Mn(2+) is required as a cofactor.

It is found in the cytoplasm. It catalyses the reaction acetate + ATP = acetyl phosphate + ADP. It participates in metabolic intermediate biosynthesis; acetyl-CoA biosynthesis; acetyl-CoA from acetate: step 1/2. Catalyzes the formation of acetyl phosphate from acetate and ATP. Can also catalyze the reverse reaction. This chain is Acetate kinase, found in Acholeplasma laidlawii (strain PG-8A).